The sequence spans 411 residues: 2,3-bisphosphoglycerate-independent phosphoglycerate mutase (411 aa).

This sequence belongs to the BPG-independent phosphoglycerate mutase family. A-PGAM subfamily.

It catalyses the reaction (2R)-2-phosphoglycerate = (2R)-3-phosphoglycerate. It functions in the pathway carbohydrate degradation; glycolysis; pyruvate from D-glyceraldehyde 3-phosphate: step 3/5. In terms of biological role, catalyzes the interconversion of 2-phosphoglycerate and 3-phosphoglycerate. The sequence is that of 2,3-bisphosphoglycerate-independent phosphoglycerate mutase from Pyrobaculum aerophilum (strain ATCC 51768 / DSM 7523 / JCM 9630 / CIP 104966 / NBRC 100827 / IM2).